Reading from the N-terminus, the 96-residue chain is Protein transport protein Sec61 subunit beta (96 aa).

The span at 1–17 (MPGPTPSGTNVGSSGRS) shows a compositional bias: polar residues. The segment at 1-54 (MPGPTPSGTNVGSSGRSPSKAVAARAAGSTVRQRKNASCGTRSAGRTTSAGTGG) is disordered. Position 2 is an N-acetylproline (P2). Over 2–70 (PGPTPSGTNV…EDSPGLKVGP (69 aa)) the chain is Cytoplasmic. At S7 the chain carries Phosphoserine. T9 is subject to Phosphothreonine. 3 positions are modified to phosphoserine: S13, S14, and S17. A lipid anchor (S-palmitoyl cysteine) is attached at C39. Over residues 40-50 (GTRSAGRTTSA) the composition is skewed to low complexity. The helical transmembrane segment at 71–91 (VPVLVMSLLFIAAVFMLHIWG) threads the bilayer.

It belongs to the SEC61-beta family. The SEC61 channel-forming translocon complex consists of channel-forming core components SEC61A1, SEC61B and SEC61G and different auxiliary components such as SEC62 and SEC63. The SEC61 channel associates with the multi-pass translocon (MPT) complex. Interacts with TRAM1.

The protein localises to the endoplasmic reticulum membrane. Its function is as follows. Component of SEC61 channel-forming translocon complex that mediates transport of signal peptide-containing precursor polypeptides across the endoplasmic reticulum (ER). Forms a ribosome receptor and a gated pore in the ER membrane, both functions required for cotranslational translocation of nascent polypeptides. The SEC61 channel is also involved in ER membrane insertion of transmembrane proteins: it mediates membrane insertion of the first few transmembrane segments of proteins, while insertion of subsequent transmembrane regions of multi-pass membrane proteins is mediated by the multi-pass translocon (MPT) complex. The SEC61 channel cooperates with the translocating protein TRAM1 to import nascent proteins into the ER. Required for PKD1/Polycystin-1 biogenesis. This Mus musculus (Mouse) protein is Protein transport protein Sec61 subunit beta.